A 147-amino-acid polypeptide reads, in one-letter code: Small ribosomal subunit protein uS12 (147 aa).

Belongs to the universal ribosomal protein uS12 family. As to quaternary structure, part of the 30S ribosomal subunit.

Functionally, with S4 and S5 plays an important role in translational accuracy. Located at the interface of the 30S and 50S subunits. This chain is Small ribosomal subunit protein uS12, found in Thermococcus kodakarensis (strain ATCC BAA-918 / JCM 12380 / KOD1) (Pyrococcus kodakaraensis (strain KOD1)).